The chain runs to 257 residues: Global transcriptional regulator CodY (257 aa).

The interval 1 to 155 (MSLLSKTREL…AATVIGMEIL (155 aa)) is GAF domain. The H-T-H motif DNA-binding region spans 203–222 (ASKVADRVGITRSVIVNALR).

Belongs to the CodY family.

It localises to the cytoplasm. Functionally, DNA-binding global transcriptional regulator which is involved in the adaptive response to starvation and acts by directly or indirectly controlling the expression of numerous genes in response to nutrient availability. During rapid exponential growth, CodY is highly active and represses genes whose products allow adaptation to nutrient depletion. The polypeptide is Global transcriptional regulator CodY (Staphylococcus saprophyticus subsp. saprophyticus (strain ATCC 15305 / DSM 20229 / NCIMB 8711 / NCTC 7292 / S-41)).